The sequence spans 3914 residues: Trichosetin synthetase PKS-NRPS1 (3914 aa).

The region spanning Asn-4–Ala-420 is the Ketosynthase family 3 (KS3) domain. Active-site for beta-ketoacyl synthase activity residues include Cys-177, His-301, and His-340. The malonyl-CoA:ACP transacylase (MAT) domain stretch occupies residues Val-525 to Ala-847. The segment at His-913–Pro-1047 is N-terminal hotdog fold. The interval His-913–Thr-1214 is dehydratase (DH) domain. One can recognise a PKS/mFAS DH domain in the interval His-913–Glu-1216. His-946 serves as the catalytic Proton acceptor; for dehydratase activity. A C-terminal hotdog fold region spans residues Leu-1062–Glu-1216. Asp-1122 (proton donor; for dehydratase activity) is an active-site residue. A methyltransferase (MT) domain region spans residues Glu-1364–Leu-1593. The segment at Thr-2083–Ser-2255 is ketoreductase (KR) domain. One can recognise a Carrier 1 domain in the interval Leu-2356–Ile-2436. Ser-2396 is modified (O-(pantetheine 4'-phosphoryl)serine). The segment at Glu-2447 to Lys-2518 is disordered. The span at Gln-2481 to Glu-2500 shows a compositional bias: polar residues. Residues Ser-2529–Thr-2956 form a condensation (C) domain region. The segment at Gln-2991 to Asp-3388 is adenylation (A) (KR) domain. The region spanning Gly-3502–Gly-3579 is the Carrier 2 domain. O-(pantetheine 4'-phosphoryl)serine is present on Ser-3539. A reductase (RED) domain region spans residues Leu-3615 to Ala-3831.

In the C-terminal section; belongs to the NRP synthetase family.

It carries out the reaction L-serine + 7 malonyl-CoA + acetyl-CoA + 2 S-adenosyl-L-methionine + ATP + 8 NADPH + 11 H(+) = (5S)-3-[(2E,6R,8E,10E,12E)-2,6-dimethyltetradeca-2,8,10,12-tetraenoyl]-5-(hydroxymethyl)pyrrolidine-2,4-dione + AMP + 2 S-adenosyl-L-homocysteine + 7 CO2 + diphosphate + 8 NADP(+) + 8 CoA + 6 H2O. It participates in mycotoxin biosynthesis. In terms of biological role, hybrid PKS-NRPS synthetase; part of the gene cluster that mediates the biosynthesis of trichosetin, a trans-fused decalin-containing tetramic acid with antimicrobial activity. The PKS module of PKS-NRPS1 together with the enoylreductase (ER) catalyze the formation of the polyketide unit which is then conjugated to L-serine by the condensation domain of the PKS-NRPS1 NRPS module. Activity of the Dieckmann cyclase domain (RED) results in release of the Dieckmann product intermediate. Diels-Alderase (DA) is involved in endo-selective Diels-Alder cycloaddition to form the decalin ring, leading to the production of N-desmethylequisetin also called trichosetin. The cluster does not contain the equisetin N-methyltransferase and consequently, trichosetin is isolated as final product. The sequence is that of Trichosetin synthetase PKS-NRPS1 from Gibberella fujikuroi (strain CBS 195.34 / IMI 58289 / NRRL A-6831) (Bakanae and foot rot disease fungus).